Here is a 158-residue protein sequence, read N- to C-terminus: UPF0260 protein RHECIAT_CH0001358 (158 aa).

This sequence belongs to the UPF0260 family.

The polypeptide is UPF0260 protein RHECIAT_CH0001358 (Rhizobium etli (strain CIAT 652)).